The sequence spans 541 residues: AT-rich interactive domain-containing protein 3A (541 aa).

Positions arginine 17–threonine 172 are disordered. A compositionally biased stretch (low complexity) spans leucine 55–alanine 73. Residues serine 84–lysine 102 are compositionally biased toward acidic residues. The segment covering glutamate 103–proline 112 has biased composition (basic and acidic residues). The span at glycine 115 to glutamate 144 shows a compositional bias: acidic residues. One can recognise an ARID domain in the interval aspartate 212–arginine 304. In terms of domain architecture, REKLES spans alanine 407–serine 501. An important for nuclear localization region spans residues alanine 408–glutamine 450. Residues proline 452–threonine 473 are homodimerization. Positions glutamine 497 to glycine 504 are important for cytoplasmic localization. The interval proline 499–proline 541 is disordered.

In terms of assembly, homodimer.

Its subcellular location is the nucleus. It is found in the cytoplasm. Its function is as follows. Transcription factor required for smad1 and smad2-mediated responses to TGFbeta during mesoderm induction. The chain is AT-rich interactive domain-containing protein 3A (arid3a) from Xenopus tropicalis (Western clawed frog).